The chain runs to 202 residues: UDP-N-acetylglucosamine transferase subunit ALG13 (202 aa).

This sequence belongs to the glycosyltransferase 28 family. In terms of assembly, heterodimer with ALG14 to form a functional enzyme.

It is found in the endoplasmic reticulum. It carries out the reaction an N-acetyl-alpha-D-glucosaminyl-diphospho-di-trans,poly-cis-dolichol + UDP-N-acetyl-alpha-D-glucosamine = an N,N'-diacetylchitobiosyl-diphospho-di-trans,poly-cis-dolichol + UDP + H(+). Functionally, involved in protein N-glycosylation. Essential for the second step of the dolichol-linked oligosaccharide pathway. The chain is UDP-N-acetylglucosamine transferase subunit ALG13 (ALG13) from Saccharomyces cerevisiae (strain ATCC 204508 / S288c) (Baker's yeast).